The following is a 124-amino-acid chain: Small ribosomal subunit protein uS12 (124 aa).

3-methylthioaspartic acid is present on aspartate 89.

It belongs to the universal ribosomal protein uS12 family. As to quaternary structure, part of the 30S ribosomal subunit. Contacts proteins S8 and S17. May interact with IF1 in the 30S initiation complex.

With S4 and S5 plays an important role in translational accuracy. Its function is as follows. Interacts with and stabilizes bases of the 16S rRNA that are involved in tRNA selection in the A site and with the mRNA backbone. Located at the interface of the 30S and 50S subunits, it traverses the body of the 30S subunit contacting proteins on the other side and probably holding the rRNA structure together. The combined cluster of proteins S8, S12 and S17 appears to hold together the shoulder and platform of the 30S subunit. The chain is Small ribosomal subunit protein uS12 from Proteus mirabilis (strain HI4320).